We begin with the raw amino-acid sequence, 363 residues long: Protein-arginine kinase (363 aa).

Residues 24–254 form the Phosphagen kinase C-terminal domain; sequence IVLSSRIRLA…AQLIEQERSA (231 aa). 27–31 is a binding site for ATP; it reads SSRIR. A phosphoarginine; by autocatalysis mark is found at arginine 29, arginine 40, and arginine 86. ATP is bound by residues histidine 92, arginine 125, and 176-180; that span reads RASVM. Arginine 190 is modified (phosphoarginine; by autocatalysis). 207 to 212 lines the ATP pocket; the sequence is RGIYGE. Phosphoarginine; by autocatalysis is present on residues arginine 255, arginine 269, and arginine 272. Positions 337–342 match the RDXXRA motif of the pArg binding pocket involved in allosteric regulation motif; the sequence is RDIRRA. Residue arginine 346 is modified to Phosphoarginine; by autocatalysis.

The protein belongs to the ATP:guanido phosphotransferase family. In terms of assembly, interacts with CtsR in its autophosphorylated form. Interacts with McsA in nonstressed as well as in heat-stressed cells, whereas strongly interacts with ClpC only in nonstressed cells. Autophosphorylated on Arg residues. Phosphorylation on Arg-40 and Arg-86 are up-regulated upon stress conditions.

It localises to the cytoplasm. The catalysed reaction is L-arginyl-[protein] + ATP = N(omega)-phospho-L-arginyl-[protein] + ADP + H(+). Its activity is regulated as follows. Appears to be allosterically activated by the binding of pArg-containing polypeptides to the pArg-binding pocket localized in the C-terminal domain of McsB. The McsB kinase is inhibited in nonstressed cells by direct interaction with ClpC; upon heat exposure, the interaction of McsB with ClpC is dramatically decreased, leading to McsB release and activation during heat stress. Its kinase activity is counteracted by the protein-arginine-phosphatase YwlE in vivo. Requires McsA for full kinase activity. Catalyzes the specific phosphorylation of arginine residues in a large number of proteins. Is part of the bacterial stress response system, where it is involved in regulating the global heat shock repressor CtsR; phosphorylates arginine residues in the winged helix-turn-helix domain of CtsR, thereby preventing its binding to DNA and consequently inducing the expression of repressed genes. The transcriptional repressor HrcA, the chaperone GroEL, the unfoldase ClpC, together with several ribosomal subunits, represent other physiological targets of McsB under stress conditions. Protein arginine phosphorylation has a physiologically important role and is involved in the regulation of many critical cellular processes, such as protein homeostasis, motility, competence, and stringent and stress responses, by regulating gene expression and protein activity. Functions as an adapter whose kinase activity is required for ClpCP-mediated degradation of CtsR during heat stress. Is required for the delocalization of competence proteins from the cell poles, probably via a role in the degradation of anchor proteins. This Bacillus subtilis (strain 168) protein is Protein-arginine kinase.